Reading from the N-terminus, the 1323-residue chain is PAS domain-containing serine/threonine-protein kinase (1323 aa).

Met1 is subject to N-acetylmethionine. The residue at position 19 (Ser19) is a Phosphoserine. A disordered region spans residues 20–47; that stretch reads LPLPVSAEGPAAQTTAEPSRSFSSAHRH. A compositionally biased stretch (polar residues) spans 31–43; that stretch reads AQTTAEPSRSFSS. Thr34 carries the phosphothreonine modification. PAS domains are found at residues 119–190 and 335–402; these read SSPL…MEAD and YRAS…SLQL. Phosphoserine is present on Ser582. Residues 837-857 are disordered; it reads AASDRESPGHVPSTLDAGPED. Ser939 carries the phosphoserine modification. The region spanning 999–1251 is the Protein kinase domain; the sequence is YSTMSPLGSG…LEKLVTDPWV (253 aa). Residues 1005–1013, Lys1028, and 1082–1089 each bind ATP; these read LGSGAFGFV and EKHGSGLD. Asp1128 (proton acceptor) is an active-site residue. Residue Asp1146 participates in ATP binding. 2 positions are modified to phosphothreonine; by autocatalysis: Thr1161 and Thr1165. The tract at residues 1298-1323 is disordered; the sequence is CGGPVPGEAPNGQGCLHPGDPRLLTS.

It belongs to the protein kinase superfamily. CAMK Ser/Thr protein kinase family. Post-translationally, autophosphorylated on Thr-1161 and Thr-1165. Autophosphorylation is activated by phospholipids. As to expression, ubiquitously expressed, with slightly higher expression in brain, prostate and testis. Reduced expression was found in placenta. Present in germ cells of testis and in the midpiece of sperm tails (at protein level).

Its subcellular location is the cytoplasm. The protein localises to the nucleus. The enzyme catalyses L-seryl-[protein] + ATP = O-phospho-L-seryl-[protein] + ADP + H(+). It carries out the reaction L-threonyl-[protein] + ATP = O-phospho-L-threonyl-[protein] + ADP + H(+). Its activity is regulated as follows. Protein kinase activity is inhibited by the first PAS domain: binding of an unidentified ligand desinhibits the protein kinase activity. May be activated by autophosphorylation on Thr-1161 and Thr-1165. The activating role of autophosphorylation at Thr-1161 is unclear: according to a report, autophosphorylation at Thr-1161 does not play a major role in activation. Autophosphorylation is enhanced upon phosphatidylinositol monophosphate (phosphatidylinositol 4-phosphate) binding and inhibited upon phosphatidylinositol bi- and tri-phosphate binding. In contrast, phosphorylation of target proteins is inhibited upon all phosphatidylinositol-binding (phosphatidylinositol mono- bi- and tri-phosphate). Its function is as follows. Serine/threonine-protein kinase involved in energy homeostasis and protein translation. Phosphorylates EEF1A1, GYS1, PDX1 and RPS6. Probably plays a role under changing environmental conditions (oxygen, glucose, nutrition), rather than under standard conditions. Acts as a sensor involved in energy homeostasis: regulates glycogen synthase synthesis by mediating phosphorylation of GYS1, leading to GYS1 inactivation. May be involved in glucose-stimulated insulin production in pancreas and regulation of glucagon secretion by glucose in alpha cells; however such data require additional evidences. May play a role in regulation of protein translation by phosphorylating EEF1A1, leading to increase translation efficiency. May also participate in respiratory regulation. This Homo sapiens (Human) protein is PAS domain-containing serine/threonine-protein kinase (PASK).